Here is a 631-residue protein sequence, read N- to C-terminus: Iron transport multicopper oxidase FET3 (631 aa).

The signal sequence occupies residues 1–25; the sequence is MKVSTHHFLPSLLVALWSWATVAQA. The Extracellular portion of the chain corresponds to 26 to 564; sequence ATHTFNWTTG…ANIPDGFTAK (539 aa). Asn31 and Asn81 each carry an N-linked (GlcNAc...) asparagine glycan. Plastocyanin-like domains follow at residues 50–148 and 195–297; these read ITCN…LVVE and NLII…LMLN. The Cu cation site is built by His85 and His87. 2 N-linked (GlcNAc...) asparagine glycosylation sites follow: Asn92 and Asn117. The Cu cation site is built by His130 and His132. 7 N-linked (GlcNAc...) asparagine glycosylation sites follow: Asn199, Asn203, Asn249, Asn270, Asn297, Asn364, and Asn413. The Plastocyanin-like 3 domain occupies 387–506; that stretch reads NPLVYGTNTN…QGLALLLIEA (120 aa). Cu cation-binding residues include His418, His421, His423, His488, Cys489, His490, and His494. A helical transmembrane segment spans residues 565-585; it reads GIVAMTFSCLAGVLGLISLST. The Cytoplasmic segment spans residues 586 to 630; it reads YGLMGVKKSEEEIIRDLGMDPDAVEKVDVSDINSDEDSSRTSKNI. Positions 610–631 are disordered; it reads EKVDVSDINSDEDSSRTSKNIE. Residues 622–631 show a composition bias toward basic and acidic residues; it reads DSSRTSKNIE.

This sequence belongs to the multicopper oxidase family. It depends on Cu cation as a cofactor.

It is found in the cell membrane. Functionally, iron transport multicopper ferroxidase required for Fe(2+) high affinity uptake. Required to oxidize Fe(2+) and release it from the transporter. Essential component of copper-dependent iron transport. This chain is Iron transport multicopper oxidase FET3 (FET3), found in Kluyveromyces lactis (strain ATCC 8585 / CBS 2359 / DSM 70799 / NBRC 1267 / NRRL Y-1140 / WM37) (Yeast).